A 264-amino-acid chain; its full sequence is Hydroxyethylthiazole kinase (264 aa).

Met-52 is a binding site for substrate. Residues Arg-127 and Thr-173 each contribute to the ATP site. Gly-200 lines the substrate pocket.

The protein belongs to the Thz kinase family. Mg(2+) is required as a cofactor.

It carries out the reaction 5-(2-hydroxyethyl)-4-methylthiazole + ATP = 4-methyl-5-(2-phosphooxyethyl)-thiazole + ADP + H(+). It functions in the pathway cofactor biosynthesis; thiamine diphosphate biosynthesis; 4-methyl-5-(2-phosphoethyl)-thiazole from 5-(2-hydroxyethyl)-4-methylthiazole: step 1/1. Catalyzes the phosphorylation of the hydroxyl group of 4-methyl-5-beta-hydroxyethylthiazole (THZ). This Serratia proteamaculans (strain 568) protein is Hydroxyethylthiazole kinase.